The following is a 128-amino-acid chain: Type III secretion protein HrcQb (128 aa).

A compositionally biased stretch (acidic residues) spans 1–21 (MSTEDLYQEDVEMLDDYEDPS). Positions 1–57 (MSTEDLYQEDVEMLDDYEDPSTEQHWSEEDGEPSGYATAEPDDHAAQEEQDEPPALD) are disordered. Residues 50 to 128 (QDEPPALDSL…LQITRLVTRS (79 aa)) form a hrcQb-C region. Residues 78-81 (RRLD) form a dimer-dimer interface region.

This sequence belongs to the FliN/MopA/SpaO family. In terms of assembly, homotetramer. The four monomers assemble into two tightly bound homodimers. Interacts with HrcQa.

The protein resides in the cytoplasm. In terms of biological role, component of the type III secretion system, which is required for effector protein delivery, parasitism, and pathogenicity. Probably participates in the formation of a C-ring-like assembly along with HrcQa. The polypeptide is Type III secretion protein HrcQb (hrcQb) (Pseudomonas savastanoi pv. phaseolicola (Pseudomonas syringae pv. phaseolicola)).